A 79-amino-acid chain; its full sequence is Small ribosomal subunit protein bS18 (79 aa).

The protein belongs to the bacterial ribosomal protein bS18 family. Part of the 30S ribosomal subunit. Forms a tight heterodimer with protein bS6.

Its function is as follows. Binds as a heterodimer with protein bS6 to the central domain of the 16S rRNA, where it helps stabilize the platform of the 30S subunit. The protein is Small ribosomal subunit protein bS18 of Pseudarthrobacter chlorophenolicus (strain ATCC 700700 / DSM 12829 / CIP 107037 / JCM 12360 / KCTC 9906 / NCIMB 13794 / A6) (Arthrobacter chlorophenolicus).